Consider the following 2395-residue polypeptide: Helicase ssl-1 (2395 aa).

The segment covering 1 to 12 (MPATPVRASSTR) has biased composition (low complexity). A disordered region spans residues 1–62 (MPATPVRASS…EKKKKKTSDD (62 aa)). Residues 227-300 (LPKCVEPERN…IKEKRKMCAG (74 aa)) enclose the HSA domain. Residues 354-363 (LVSSSKSPSI) show a composition bias toward polar residues. Disordered regions lie at residues 354–404 (LVSS…VRQE) and 444–504 (EKLE…HGVL). Composition is skewed to basic and acidic residues over residues 365-375 (SDRDDKDEEFK), 394-404 (KSQKKEDVRQE), and 444-462 (EKLEEQKARKEACGDNEEK). Residues 388-464 (TIANAEKSQK…ACGDNEEKME (77 aa)) are a coiled coil. A compositionally biased stretch (polar residues) spans 470–490 (SSDAQKPSTSSSDLTAEQLQD). One can recognise a Helicase ATP-binding domain in the interval 570–735 (VTLYEKNLNG…WSLMHFLMPT (166 aa)). 583-590 (DEMGLGKT) contacts ATP. The segment at 963–982 (AQPLQNGNSIPQNAPNRPQT) is disordered. In terms of domain architecture, Helicase C-terminal spans 1196–1342 (LLRQLYLYKH…ELAIDEAGFT (147 aa)). Residues 1452-1476 (KPEFEEECKEAEALIDQKREEWDKN) are a coiled coil. Disordered stretches follow at residues 1615–1706 (ESAA…EEPD), 1977–2073 (SIQH…RRNA), 2092–2143 (QSGK…PQQR), 2276–2306 (QMRSNNGGGVGGQGGLQGGPGGPQGIRRPLV), and 2350–2395 (MQMP…PPQN). Low complexity-rich tracts occupy residues 1647-1669 (QQPTTTATTTTTVPQQQQQQQQQ) and 1981-1995 (LQSSSTGLGSQQNLQ). Over residues 1996–2019 (NSHNSEQRNNVQNMHQNQYNSSQN) the composition is skewed to polar residues. 2 stretches are compositionally biased toward low complexity: residues 2051–2073 (LVQQGSQQQQQQQQQATLQRRNA) and 2092–2114 (QSGKNCGQGQSFVVMGSQSSSND). Over residues 2115–2129 (GQGGASTVGGGGGGS) the composition is skewed to gly residues. Residues 2130–2142 (QQPHQQQQQQPQQ) show a composition bias toward low complexity. The segment covering 2281–2299 (NGGGVGGQGGLQGGPGGPQ) has biased composition (gly residues). Residues 2361-2377 (QQQAPPQSSQQASQQAP) show a composition bias toward low complexity.

This sequence belongs to the SNF2/RAD54 helicase family. SWR1 subfamily.

The protein resides in the nucleus. Its function is as follows. Probable catalytic component of a chromatin-remodeling complex which mediates the ATP-dependent exchange of histone H2A variant H2AV/htz-1 for H2A, leading to transcriptional regulation of selected genes by chromatin remodeling. Involved in foregut development, and may be involved in vulval development. The sequence is that of Helicase ssl-1 (ssl-1) from Caenorhabditis elegans.